The following is a 290-amino-acid chain: Taxis protein CheF1 (290 aa).

Interacts with chemotaxis (Che) proteins as well as flagella accessory (Fla) proteins.

Functionally, involved in taxis signal transduction. Essential for the ability to control the direction of flagellar rotation. May have a role between CheY and the flagellum. This is Taxis protein CheF1 (cheF1) from Halobacterium salinarum (strain ATCC 29341 / DSM 671 / R1).